The chain runs to 398 residues: Acetate kinase (398 aa).

N9 is a Mg(2+) binding site. K16 provides a ligand contact to ATP. R89 contributes to the substrate binding site. D146 functions as the Proton donor/acceptor in the catalytic mechanism. ATP contacts are provided by residues 206-210 (HLGNG), 281-283 (DCR), and 329-333 (GIGEN). A Mg(2+)-binding site is contributed by E384.

It belongs to the acetokinase family. As to quaternary structure, homodimer. Requires Mg(2+) as cofactor. Mn(2+) serves as cofactor.

The protein resides in the cytoplasm. It catalyses the reaction acetate + ATP = acetyl phosphate + ADP. Its pathway is metabolic intermediate biosynthesis; acetyl-CoA biosynthesis; acetyl-CoA from acetate: step 1/2. Its function is as follows. Catalyzes the formation of acetyl phosphate from acetate and ATP. Can also catalyze the reverse reaction. This Vibrio campbellii (strain ATCC BAA-1116) protein is Acetate kinase.